A 717-amino-acid chain; its full sequence is MRKILRLKVGREDLILETGLLAKQANGAVLATYGGSTVLATVCCSDSVRENLDFVPLSVEYNEKYYAAGKIPGGFIKREGKPKDKEVLVSRLIDRPMRPLFDKRFGREIQVVPTTLSTDQMNPPDIVGMNAAFAAVFLSDIPFNGPIAAVRLAYLNNEFIVNPSFDEIQDSILDIVVAGSLDGITMVEGGANEVSEEVLLSAIDKAYEYIKQICNLQKEFVSIIGEREKLPLAYEEGVFEFKDELKNLIYSELKDACFVKGKLNRDKAIKLVKQKAYEHFSSISQVNEDNEFLFYKAFDDFEREIVRKSILENNLRTDGRTSTQIRDIVAEVDLLKRTHGSSLFTRGETQALAVTTLGTSIDEQIMDDIDGDKRLNFMLHYNFPPFSVGETGRLMTGRREVGHGHLAQRSLEAMLPKKDDFPYTIRVVSEILESNGSSSMATVCSGSMSLMAAGVPVKEQVAGIAMGLISDGDKYVVLSDILGEEDHLGDMDFKVAGTKNGITGFQMDIKISNVTKQLMKDALEQARIGRMHILSIMDSVISRSRDDISVNAPKIVQLQIDIDKISLVIGSTGKTVKAITDEFEVRVQIEQDGRITLFGTDSLKMQKAKAKIESIVREPKIGEIYDGIVKKINSFGAFIELTPIKEGFLSNRARSRDDRYGDMRHSRYGSGRHSRYGRDNRNTFGMNPPRLEEGQIVKVKISDIDKFGKIELELVRD.

Residues Asp486 and Asp492 each coordinate Mg(2+). The KH domain maps to 553-612; the sequence is PKIVQLQIDIDKISLVIGSTGKTVKAITDEFEVRVQIEQDGRITLFGTDSLKMQKAKAKI. Positions 622 to 715 constitute an S1 motif domain; that stretch reads GEIYDGIVKK…KFGKIELELV (94 aa). Positions 659-689 are disordered; it reads RYGDMRHSRYGSGRHSRYGRDNRNTFGMNPP. Residues 666–675 show a composition bias toward basic residues; the sequence is SRYGSGRHSR.

The protein belongs to the polyribonucleotide nucleotidyltransferase family. Mg(2+) serves as cofactor.

It localises to the cytoplasm. It catalyses the reaction RNA(n+1) + phosphate = RNA(n) + a ribonucleoside 5'-diphosphate. Involved in mRNA degradation. Catalyzes the phosphorolysis of single-stranded polyribonucleotides processively in the 3'- to 5'-direction. The sequence is that of Polyribonucleotide nucleotidyltransferase from Borrelia hermsii (strain HS1 / DAH).